Consider the following 403-residue polypeptide: Chalcone synthase 2 (403 aa).

59-66 (RFQRMCES) provides a ligand contact to CoA. Residue Cys168 is the Acyl-thioester intermediate of the active site. 220 to 221 (GD) contacts substrate. Ala313 contributes to the CoA binding site.

The protein belongs to the thiolase-like superfamily. Chalcone/stilbene synthases family. Homodimer.

The catalysed reaction is (E)-4-coumaroyl-CoA + 3 malonyl-CoA + 3 H(+) = 2',4,4',6'-tetrahydroxychalcone + 3 CO2 + 4 CoA. It functions in the pathway secondary metabolite biosynthesis; flavonoid biosynthesis. Functionally, the primary product of this enzyme is 4,2',4',6'-tetrahydroxychalcone (also termed naringenin-chalcone or chalcone) which can under specific conditions spontaneously isomerize into naringenin. The sequence is that of Chalcone synthase 2 (CHS2) from Oryza sativa subsp. japonica (Rice).